The following is a 256-amino-acid chain: Fat body protein 2 (256 aa).

Val-10–Met-34 is an NAD(+) binding site. Residue Ser-138 coordinates substrate. The active-site Proton acceptor is Tyr-151.

This sequence belongs to the short-chain dehydrogenases/reductases (SDR) family.

The sequence is that of Fat body protein 2 (Fbp2) from Drosophila melanogaster (Fruit fly).